The primary structure comprises 295 residues: ESX-3 secretion-associated protein EspG3 (295 aa).

Belongs to the EspG family. Interacts specifically with ESX-3-dependent PE/PPE proteins.

Its subcellular location is the cytoplasm. Its function is as follows. Specific chaperone for cognate PE/PPE proteins. Plays an important role in preventing aggregation of PE/PPE dimers. This chain is ESX-3 secretion-associated protein EspG3, found in Mycobacterium tuberculosis (strain CDC 1551 / Oshkosh).